Consider the following 679-residue polypeptide: DNA ligase (679 aa).

Residues 32–36 (DTLYD), 81–82 (SL), and E115 each bind NAD(+). K117 acts as the N6-AMP-lysine intermediate in catalysis. The NAD(+) site is built by R138, E175, K293, and K317. Zn(2+) contacts are provided by C411, C414, C429, and C434. The BRCT domain maps to 601–679 (NSSGALLGKT…EAELQKLLST (79 aa)).

The protein belongs to the NAD-dependent DNA ligase family. LigA subfamily. The cofactor is Mg(2+). Requires Mn(2+) as cofactor.

It catalyses the reaction NAD(+) + (deoxyribonucleotide)n-3'-hydroxyl + 5'-phospho-(deoxyribonucleotide)m = (deoxyribonucleotide)n+m + AMP + beta-nicotinamide D-nucleotide.. DNA ligase that catalyzes the formation of phosphodiester linkages between 5'-phosphoryl and 3'-hydroxyl groups in double-stranded DNA using NAD as a coenzyme and as the energy source for the reaction. It is essential for DNA replication and repair of damaged DNA. In Parasynechococcus marenigrum (strain WH8102), this protein is DNA ligase.